A 268-amino-acid chain; its full sequence is Putative hydro-lyase PSPTO_5379 (268 aa).

Belongs to the D-glutamate cyclase family.

The protein is Putative hydro-lyase PSPTO_5379 of Pseudomonas syringae pv. tomato (strain ATCC BAA-871 / DC3000).